Reading from the N-terminus, the 184-residue chain is GTP cyclohydrolase 1 (184 aa).

Zn(2+) contacts are provided by Cys-75, His-78, and Cys-146.

This sequence belongs to the GTP cyclohydrolase I family. Homomer.

The enzyme catalyses GTP + H2O = 7,8-dihydroneopterin 3'-triphosphate + formate + H(+). It functions in the pathway cofactor biosynthesis; 7,8-dihydroneopterin triphosphate biosynthesis; 7,8-dihydroneopterin triphosphate from GTP: step 1/1. In Streptococcus pneumoniae (strain ATCC 700669 / Spain 23F-1), this protein is GTP cyclohydrolase 1.